The sequence spans 494 residues: PTS system cellobiose-specific EIIC component (494 aa).

Residues M8–F481 enclose the PTS EIIC type-3 domain. The next 9 helical transmembrane spans lie at F32–V52, I92–W112, A119–L139, A188–L208, F227–I247, I274–G294, A355–F375, V406–I426, and A463–I483.

Its subcellular location is the cell membrane. The phosphoenolpyruvate-dependent sugar phosphotransferase system (PTS), a major carbohydrate active transport system, catalyzes the phosphorylation of incoming sugar substrates concomitant with their translocation across the cell membrane. Involved in cellobiose transport with PtcA and PtcB. This system can also transport lactose. This chain is PTS system cellobiose-specific EIIC component, found in Lactococcus lactis subsp. lactis (strain IL1403) (Streptococcus lactis).